The primary structure comprises 953 residues: Isoleucine--tRNA ligase (953 aa).

Residues 58–68 (PYANGSIHIGH) carry the 'HIGH' region motif. Glu577 provides a ligand contact to L-isoleucyl-5'-AMP. The 'KMSKS' region motif lies at 618–622 (KMSKS). Lys621 is a binding site for ATP. Residues Cys916, Cys919, Cys936, and Cys939 each contribute to the Zn(2+) site.

It belongs to the class-I aminoacyl-tRNA synthetase family. IleS type 1 subfamily. In terms of assembly, monomer. The cofactor is Zn(2+).

It localises to the cytoplasm. It catalyses the reaction tRNA(Ile) + L-isoleucine + ATP = L-isoleucyl-tRNA(Ile) + AMP + diphosphate. Functionally, catalyzes the attachment of isoleucine to tRNA(Ile). As IleRS can inadvertently accommodate and process structurally similar amino acids such as valine, to avoid such errors it has two additional distinct tRNA(Ile)-dependent editing activities. One activity is designated as 'pretransfer' editing and involves the hydrolysis of activated Val-AMP. The other activity is designated 'posttransfer' editing and involves deacylation of mischarged Val-tRNA(Ile). This Aeromonas hydrophila subsp. hydrophila (strain ATCC 7966 / DSM 30187 / BCRC 13018 / CCUG 14551 / JCM 1027 / KCTC 2358 / NCIMB 9240 / NCTC 8049) protein is Isoleucine--tRNA ligase.